Reading from the N-terminus, the 308-residue chain is Cilia- and flagella-associated protein 73 (308 aa).

Coiled-coil stretches lie at residues 103 to 134 and 164 to 227; these read RIQK…LEKN and LSAT…QEAK.

The protein belongs to the CFAP73 family. In terms of assembly, interacts with FAP100; form the modifier of inner arm (MIA) complex.

Its subcellular location is the cytoplasm. It is found in the cytoskeleton. It localises to the flagellum axoneme. As part of MIA, a complex associated with the outer doublet microtubules of the axoneme, may play a role in ciliary/flagellar motility by regulating the assembly and the activity of inner dynein arm. The polypeptide is Cilia- and flagella-associated protein 73 (Chlamydomonas reinhardtii (Chlamydomonas smithii)).